The sequence spans 195 residues: Probable WRKY transcription factor 56 (195 aa).

The span at 1 to 10 (MEGVDNTNPM) shows a compositional bias: polar residues. 2 disordered regions span residues 1–20 (MEGV…ENNN) and 70–93 (EMGG…KGKG). The segment at residues 108–173 (SDDDVLDDGY…YEGVHNHPCE (66 aa)) is a DNA-binding region (WRKY).

Belongs to the WRKY group II-c family.

It is found in the nucleus. Its function is as follows. Transcription factor. Interacts specifically with the W box (5'-(T)TGAC[CT]-3'), a frequently occurring elicitor-responsive cis-acting element. This chain is Probable WRKY transcription factor 56 (WRKY56), found in Arabidopsis thaliana (Mouse-ear cress).